Here is a 1258-residue protein sequence, read N- to C-terminus: Cohesin subunit SA-1 (1258 aa).

Residues 1–84 are disordered; sequence MITSELPVLQ…HPQQNGEGEP (84 aa). A compositionally biased stretch (polar residues) spans 10–19; that stretch reads QDSTNETTAH. Phosphoserine is present on serine 24. Residues 53–62 are compositionally biased toward basic and acidic residues; it reads SPGEKSRIEA. The 86-residue stretch at 296 to 381 folds into the SCD domain; sequence FVHRYRDAIA…NRFKDRIVSM (86 aa). Serine 756, serine 1062, and serine 1065 each carry phosphoserine. Disordered stretches follow at residues 1055–1096 and 1129–1148; these read GGED…SLDN and MGDQIQEPESEHGSEPDFLH. A compositionally biased stretch (low complexity) spans 1062–1074; sequence SVNSGSSSSKTSS. Basic residues predominate over residues 1076-1087; the sequence is RNKKGRPPLHKK. Serine 1093 carries the phosphoserine modification. The segment covering 1137-1146 has biased composition (basic and acidic residues); that stretch reads ESEHGSEPDF. Lysine 1161 is covalently cross-linked (Glycyl lysine isopeptide (Lys-Gly) (interchain with G-Cter in SUMO2)).

It belongs to the SCC3 family. In terms of assembly, cohesin complexes are composed of a heterodimer between a SMC1 protein (SMC1A or SMC1B) and SMC3, which are attached via their hinge domain, and RAD21 which link them at their heads, and one STAG protein (STAG1, STAG2 or STAG3). In cohesin complexes, STAG1 is mutually exclusive with STAG2 and STAG3. Interacts directly with RAD21 in cohesin complex. The cohesin complex interacts with the cohesin loading complex subunits NIPBL/Scc2 (via HEAT repeats) and MAU2/Scc4. NIPBL directly contacts all members of the complex, RAD21, SMC1A/B, SMC3 and STAG1. Phosphorylated by PLK1. The large dissociation of cohesin from chromosome arms during prophase is partly due to its phosphorylation.

The protein localises to the nucleus. The protein resides in the chromosome. It is found in the centromere. In terms of biological role, component of cohesin complex, a complex required for the cohesion of sister chromatids after DNA replication. The cohesin complex apparently forms a large proteinaceous ring within which sister chromatids can be trapped. At anaphase, the complex is cleaved and dissociates from chromatin, allowing sister chromatids to segregate. The cohesin complex may also play a role in spindle pole assembly during mitosis. The protein is Cohesin subunit SA-1 (STAG1) of Homo sapiens (Human).